A 265-amino-acid polypeptide reads, in one-letter code: Glycosylphosphatidylinositol anchor biosynthesis protein 11 (265 aa).

Transmembrane regions (helical) follow at residues Leu49–Thr69 and Gly79–Leu99. Asn111 and Asn112 each carry an N-linked (GlcNAc...) asparagine glycan. The next 4 helical transmembrane spans lie at Ile137–Pro157, Leu166–Leu186, Ile209–Leu229, and Ile240–Val260.

It belongs to the PIGF family.

Its subcellular location is the endoplasmic reticulum membrane. The protein operates within glycolipid biosynthesis; glycosylphosphatidylinositol-anchor biosynthesis. Acts in the GPI biosynthetic pathway between GlcNAc-PI synthesis and GPI transfer to protein. In Candida albicans (strain SC5314 / ATCC MYA-2876) (Yeast), this protein is Glycosylphosphatidylinositol anchor biosynthesis protein 11 (GPI11).